We begin with the raw amino-acid sequence, 318 residues long: tRNA uridine(34) hydroxylase (318 aa).

The region spanning 123–217 (EDDDTVIIDA…YGKDPETKGQ (95 aa)) is the Rhodanese domain. Cysteine 177 (cysteine persulfide intermediate) is an active-site residue.

It belongs to the TrhO family.

The enzyme catalyses uridine(34) in tRNA + AH2 + O2 = 5-hydroxyuridine(34) in tRNA + A + H2O. In terms of biological role, catalyzes oxygen-dependent 5-hydroxyuridine (ho5U) modification at position 34 in tRNAs. This Staphylococcus aureus (strain Mu3 / ATCC 700698) protein is tRNA uridine(34) hydroxylase.